The primary structure comprises 483 residues: Probable glycine dehydrogenase (decarboxylating) subunit 2 (483 aa).

N6-(pyridoxal phosphate)lysine is present on K267.

This sequence belongs to the GcvP family. C-terminal subunit subfamily. As to quaternary structure, the glycine cleavage system is composed of four proteins: P, T, L and H. In this organism, the P 'protein' is a heterodimer of two subunits. Pyridoxal 5'-phosphate serves as cofactor.

It catalyses the reaction N(6)-[(R)-lipoyl]-L-lysyl-[glycine-cleavage complex H protein] + glycine + H(+) = N(6)-[(R)-S(8)-aminomethyldihydrolipoyl]-L-lysyl-[glycine-cleavage complex H protein] + CO2. In terms of biological role, the glycine cleavage system catalyzes the degradation of glycine. The P protein binds the alpha-amino group of glycine through its pyridoxal phosphate cofactor; CO(2) is released and the remaining methylamine moiety is then transferred to the lipoamide cofactor of the H protein. The sequence is that of Probable glycine dehydrogenase (decarboxylating) subunit 2 from Kosmotoga olearia (strain ATCC BAA-1733 / DSM 21960 / TBF 19.5.1).